The following is a 155-amino-acid chain: Ribonuclease H (155 aa).

One can recognise an RNase H type-1 domain in the interval 1-142 (MLKQVEIFTD…CDELARAAAS (142 aa)). Mg(2+) contacts are provided by D10, E48, D70, and D134.

This sequence belongs to the RNase H family. As to quaternary structure, monomer. The cofactor is Mg(2+).

It localises to the cytoplasm. The enzyme catalyses Endonucleolytic cleavage to 5'-phosphomonoester.. In terms of biological role, endonuclease that specifically degrades the RNA of RNA-DNA hybrids. This Klebsiella pneumoniae (strain 342) protein is Ribonuclease H.